The chain runs to 815 residues: Patatin-like phospholipase domain-containing protein LELG_00944 (815 aa).

A compositionally biased stretch (polar residues) spans 41–50 (VSTTAPTTPL). Disordered regions lie at residues 41 to 105 (VSTT…PQLK) and 140 to 166 (SENLNPNSKRTKFAKSSKSSKSKSTSP). Residues 54–73 (LDMGDLSLLGGELGNGSDDV) are compositionally biased toward low complexity. Over residues 74 to 94 (VVGDDDDDDDDDDDDDDDDDD) the composition is skewed to acidic residues. A compositionally biased stretch (basic residues) spans 148 to 160 (KRTKFAKSSKSSK). A helical membrane pass occupies residues 185-205 (WPILTFVVIWVTILGFLYLAV). The PNPLA domain maps to 360–552 (LCLSGGACFA…RTDIPIDALN (193 aa)). The short motif at 391–395 (GTSGG) is the GXSXG element. Ser-393 acts as the Nucleophile in catalysis. Residue Asp-539 is the Proton acceptor of the active site. The disordered stretch occupies residues 753–815 (GSTLRDDDAD…LTKERRHTVY (63 aa)). A compositionally biased stretch (acidic residues) spans 759 to 799 (DDADADVDEDDNEDEDEEDEDENDYEEYDVEDLDDPYESDA).

It belongs to the PLPL family.

It is found in the membrane. Probable lipid hydrolase. The chain is Patatin-like phospholipase domain-containing protein LELG_00944 from Lodderomyces elongisporus (strain ATCC 11503 / CBS 2605 / JCM 1781 / NBRC 1676 / NRRL YB-4239) (Yeast).